An 88-amino-acid polypeptide reads, in one-letter code: Antitoxin VapB3 (88 aa).

Functionally, antitoxin component of a type II toxin-antitoxin (TA) system. This is Antitoxin VapB3 (vapB3) from Mycobacterium tuberculosis (strain CDC 1551 / Oshkosh).